Here is a 573-residue protein sequence, read N- to C-terminus: Urease subunit alpha (573 aa).

The 438-residue stretch at 136–573 (GAIDCHVHLI…LPMAQRYFLF (438 aa)) folds into the Urease domain. Residues His-141, His-143, and Lys-224 each coordinate Ni(2+). At Lys-224 the chain carries N6-carboxylysine. His-226 contacts substrate. His-253 and His-279 together coordinate Ni(2+). The active-site Proton donor is the His-327. Asp-367 is a Ni(2+) binding site.

It belongs to the metallo-dependent hydrolases superfamily. Urease alpha subunit family. In terms of assembly, heterotrimer of UreA (gamma), UreB (beta) and UreC (alpha) subunits. Three heterotrimers associate to form the active enzyme. Requires Ni cation as cofactor. In terms of processing, carboxylation allows a single lysine to coordinate two nickel ions.

It localises to the cytoplasm. The catalysed reaction is urea + 2 H2O + H(+) = hydrogencarbonate + 2 NH4(+). Its pathway is nitrogen metabolism; urea degradation; CO(2) and NH(3) from urea (urease route): step 1/1. The sequence is that of Urease subunit alpha from Mycobacterium sp. (strain JLS).